A 172-amino-acid polypeptide reads, in one-letter code: Signal peptidase complex catalytic subunit SEC11 (172 aa).

The Cytoplasmic portion of the chain corresponds to 1–14; sequence MLSSLGNPRQAATQ. Residues 15–35 traverse the membrane as a helical; Signal-anchor for type II membrane protein segment; sequence LLNFALILSTAFMMWKGLSVA. Topologically, residues 36-172 are lumenal; the sequence is TDSPSPIVVV…MGLMVVLQRE (137 aa). Active-site charge relay system residues include serine 49, histidine 90, and aspartate 115. A C-terminal short (CTS) helix region spans residues 158–169; the sequence is AMLGIMGLMVVL.

The protein belongs to the peptidase S26B family. In terms of assembly, component of the signal peptidase complex (SPC) composed of a catalytic subunit SEC11 and three accessory subunits SPC1, SPC2 and SPC3. The complex induces a local thinning of the ER membrane which is used to measure the length of the signal peptide (SP) h-region of protein substrates. This ensures the selectivity of the complex towards h-regions shorter than 18-20 amino acids. SPC associates with the translocon complex.

It localises to the endoplasmic reticulum membrane. The catalysed reaction is Cleavage of hydrophobic, N-terminal signal or leader sequences from secreted and periplasmic proteins.. Functionally, catalytic component of the signal peptidase complex (SPC) which catalyzes the cleavage of N-terminal signal sequences from nascent proteins as they are translocated into the lumen of the endoplasmic reticulum. Specifically cleaves N-terminal signal peptides that contain a hydrophobic alpha-helix (h-region) shorter than 18-20 amino acids. In Pyricularia oryzae (strain 70-15 / ATCC MYA-4617 / FGSC 8958) (Rice blast fungus), this protein is Signal peptidase complex catalytic subunit SEC11 (SEC11).